The chain runs to 253 residues: MAIDGWTVALQAVNFLILVLLLRHFLYRPVLAMIDRRKAEATRLLDDAALRVEAAKAERQKAETLRADLEAQADALLADSRARAGKELEELRTRARREADGILAEGRKALAEERRAAEADLRGKAAGLAVEIAGRLLAAATPGARVEPFLDRVCTRLTALPEPERQVLAGQAADGGIRIVTAVPLDEAGRAHCRDRAHTLLGPDIALTFADDPELLAGVELHFAHTVIRDSWRDLLGRIGLELDGHDDAHRIA.

A helical transmembrane segment spans residues 5 to 27; it reads GWTVALQAVNFLILVLLLRHFLY.

It belongs to the ATPase B chain family. F-type ATPases have 2 components, F(1) - the catalytic core - and F(0) - the membrane proton channel. F(1) has five subunits: alpha(3), beta(3), gamma(1), delta(1), epsilon(1). F(0) has three main subunits: a(1), b(2) and c(10-14). The alpha and beta chains form an alternating ring which encloses part of the gamma chain. F(1) is attached to F(0) by a central stalk formed by the gamma and epsilon chains, while a peripheral stalk is formed by the delta and b chains.

Its subcellular location is the cell inner membrane. In terms of biological role, f(1)F(0) ATP synthase produces ATP from ADP in the presence of a proton or sodium gradient. F-type ATPases consist of two structural domains, F(1) containing the extramembraneous catalytic core and F(0) containing the membrane proton channel, linked together by a central stalk and a peripheral stalk. During catalysis, ATP synthesis in the catalytic domain of F(1) is coupled via a rotary mechanism of the central stalk subunits to proton translocation. Component of the F(0) channel, it forms part of the peripheral stalk, linking F(1) to F(0). The sequence is that of ATP synthase subunit b 1 from Rhodospirillum centenum (strain ATCC 51521 / SW).